Reading from the N-terminus, the 223-residue chain is Nitrate reductase gamma chain (223 aa).

The chain crosses the membrane as a helical span at residues 2–27 (SGQILWGIMPYIVLTIFIGGHIYRYQ). Residues 28 to 45 (HDQFGWTAKSSELLEKKK) lie on the Cytoplasmic side of the membrane. A helical transmembrane segment spans residues 46–68 (LAAGSTLFHWGLLCVVGGHVMGI). Heme b-binding residues include His-54 and His-64. At 69 to 81 (LIPEGVYASLGIS) the chain is on the extracellular side. A helical transmembrane segment spans residues 82–111 (EHMYHKMAIGAGLPAGIAACTGLVILTYRR). Topologically, residues 112–123 (LFDKRIRKTSSP) are cytoplasmic. Residues 124-147 (SDILTLLLLLFMMLSGVAATFLNI) form a helical membrane-spanning segment. The Extracellular portion of the chain corresponds to 148 to 180 (DSKGFDYRTTVGPWFREIVLFRPDASLMESVPL). The helical transmembrane segment at 181–196 (WFKFHIVIGYVVFILW) threads the bilayer. His-185 and His-203 together coordinate heme b. Residues 197–223 (PFTRLVHVFSLPLKYLTRSYVVYRKRS) are Cytoplasmic-facing.

Requires heme as cofactor.

The protein localises to the cell membrane. It carries out the reaction nitrate + a quinol = a quinone + nitrite + H2O. In terms of biological role, the gamma chain is a membrane-embedded heme-iron unit resembling cytochrome b, which transfers electrons from quinones to the beta subunit. The chain is Nitrate reductase gamma chain (narI) from Bacillus subtilis (strain 168).